Here is a 500-residue protein sequence, read N- to C-terminus: L-arabinose isomerase (500 aa).

Glu306, Glu333, His350, and His450 together coordinate Mn(2+).

It belongs to the arabinose isomerase family. In terms of assembly, homohexamer. Mn(2+) is required as a cofactor.

It catalyses the reaction beta-L-arabinopyranose = L-ribulose. The protein operates within carbohydrate degradation; L-arabinose degradation via L-ribulose; D-xylulose 5-phosphate from L-arabinose (bacterial route): step 1/3. Functionally, catalyzes the conversion of L-arabinose to L-ribulose. This chain is L-arabinose isomerase, found in Salmonella choleraesuis (strain SC-B67).